The primary structure comprises 444 residues: MKVLLIGGGAREHAIAMALKKNELVELYTLMKNKNPGIYALSEEVSFNSETDVPAIKEFAEKIKPEIAVIGPESPLGVGASDLLEEMGIPTVGPKKLPAQIETSKEFMRNLFKKYEIDGSLKYAAFNDYGTELEGFIDEMTSLGKDVVVKPAGLTGGKGVKVVGEQLKDNEEAKIYAKEVFDKSIGGGKIIIEEKLVGVEFTLHGFVDGENIVFMPAVQDHPHAYNNDEGPITGGMGSYSCPNHGLPFLSEEMLDKAEKIMEKTVNSINLEVGPYKGFLYGQFMLTADGPKIIEYNARFGDPEAMNLLPILKTDFLDVCFAIAEGKLDKINIEFENKATVCKYVVPNGYPIDPVRNKELAVDEKAIEDANAILFYASINEENGKLYITGSRSAAVVGISENIEEAEKIAQKAIENFKGEVYYRSDIGTLDLIKKRVERVKKLAK.

Positions Arg109–Glu324 constitute an ATP-grasp domain. Residue Met140–Thr202 participates in ATP binding. Mg(2+)-binding residues include Gln282, Glu294, and Asn296. 3 residues coordinate Mn(2+): Gln282, Glu294, and Asn296.

It belongs to the GARS family. It depends on Mg(2+) as a cofactor. Mn(2+) is required as a cofactor.

The catalysed reaction is 5-phospho-beta-D-ribosylamine + glycine + ATP = N(1)-(5-phospho-beta-D-ribosyl)glycinamide + ADP + phosphate + H(+). It functions in the pathway purine metabolism; IMP biosynthesis via de novo pathway; N(1)-(5-phospho-D-ribosyl)glycinamide from 5-phospho-alpha-D-ribose 1-diphosphate: step 2/2. In Methanococcus maripaludis (strain DSM 14266 / JCM 13030 / NBRC 101832 / S2 / LL), this protein is Phosphoribosylamine--glycine ligase.